Here is a 135-residue protein sequence, read N- to C-terminus: Prostate and breast cancer overexpressed gene 1 protein (135 aa).

In terms of tissue distribution, expressed in colon, prostate, small intestine, testis and spleen, with lower expression in thymus, ovary, and peripheral blood leukocytes. Up-regulated expression in prostate, breast, and bladder cancer, but not in lung and colon cancer.

The protein resides in the cytoplasm. It localises to the nucleus. This is Prostate and breast cancer overexpressed gene 1 protein (PBOV1) from Homo sapiens (Human).